Here is a 156-residue protein sequence, read N- to C-terminus: Cyanate hydratase (156 aa).

Catalysis depends on residues R96, E99, and S122.

It belongs to the cyanase family.

The enzyme catalyses cyanate + hydrogencarbonate + 3 H(+) = NH4(+) + 2 CO2. Its function is as follows. Catalyzes the reaction of cyanate with bicarbonate to produce ammonia and carbon dioxide. The protein is Cyanate hydratase of Pseudomonas putida (strain W619).